Consider the following 21-residue polypeptide: C-phycocyanin alpha subunit (21 aa).

The protein belongs to the phycobiliprotein family. In terms of assembly, heterodimer of an alpha and a beta subunit, which further assembles into trimers and the trimers into hexamers. Post-translationally, contains one covalently linked bilin chromophore.

The protein resides in the cellular thylakoid membrane. Its function is as follows. Light-harvesting photosynthetic bile pigment-protein from the phycobiliprotein complex (phycobilisome, PBS). Phycocyanin is the major phycobiliprotein in the PBS rod. The protein is C-phycocyanin alpha subunit of Anabaena sp. (strain L31).